The chain runs to 254 residues: Serotonin N-acetyltransferase 1, chloroplastic (254 aa).

The N-terminal 74 residues, Met-1–Asn-74, are a transit peptide targeting the chloroplast. Positions Ile-111 to Phe-254 constitute an N-acetyltransferase domain.

Belongs to the acetyltransferase family. Expressed in roots and shoots.

Its subcellular location is the plastid. The protein localises to the chloroplast. It is found in the nucleus. It carries out the reaction serotonin + acetyl-CoA = N-acetylserotonin + CoA + H(+). The catalysed reaction is tyramine + acetyl-CoA = N-acetyltyramine + CoA + H(+). It catalyses the reaction tryptamine + acetyl-CoA = N-acetyltryptamine + CoA + H(+). The enzyme catalyses 5-methoxytryptamine + acetyl-CoA = melatonin + CoA + H(+). Its pathway is aromatic compound metabolism; melatonin biosynthesis; melatonin from serotonin: step 1/2. Functionally, catalyzes the N-acetylation of serotonin into N-acetylserotonin, the penultimate step in the synthesis of melatonin. Catalyzes in vitro the N-acetylation of tryptamine to produce N-acetyltryptamine, 5-methoxytryptamine to produce melatonin and tyramine to produce N-acetyltyramine. The sequence is that of Serotonin N-acetyltransferase 1, chloroplastic from Oryza sativa subsp. japonica (Rice).